The following is a 467-amino-acid chain: Acid phosphatase PHO12 (467 aa).

Positions 1–17 (MLKSAVYSILAASLVNA) are cleaved as a signal peptide. The active-site Nucleophile is His-75. Asn-97, Asn-162, Asn-192, Asn-250, and Asn-315 each carry an N-linked (GlcNAc...) asparagine glycan. Asp-338 (proton donor) is an active-site residue. N-linked (GlcNAc...) asparagine glycans are attached at residues Asn-356, Asn-390, Asn-439, Asn-445, and Asn-461.

The protein belongs to the histidine acid phosphatase family. Post-translationally, glycosylated during secretion across the membrane.

It carries out the reaction a phosphate monoester + H2O = an alcohol + phosphate. The sequence is that of Acid phosphatase PHO12 (PHO12) from Saccharomyces cerevisiae (strain ATCC 204508 / S288c) (Baker's yeast).